We begin with the raw amino-acid sequence, 104 residues long: Pyrimidine/purine nucleoside phosphorylase (104 aa).

Belongs to the nucleoside phosphorylase PpnP family.

The catalysed reaction is a purine D-ribonucleoside + phosphate = a purine nucleobase + alpha-D-ribose 1-phosphate. The enzyme catalyses adenosine + phosphate = alpha-D-ribose 1-phosphate + adenine. It catalyses the reaction cytidine + phosphate = cytosine + alpha-D-ribose 1-phosphate. It carries out the reaction guanosine + phosphate = alpha-D-ribose 1-phosphate + guanine. The catalysed reaction is inosine + phosphate = alpha-D-ribose 1-phosphate + hypoxanthine. The enzyme catalyses thymidine + phosphate = 2-deoxy-alpha-D-ribose 1-phosphate + thymine. It catalyses the reaction uridine + phosphate = alpha-D-ribose 1-phosphate + uracil. It carries out the reaction xanthosine + phosphate = alpha-D-ribose 1-phosphate + xanthine. Catalyzes the phosphorolysis of diverse nucleosides, yielding D-ribose 1-phosphate and the respective free bases. Can use uridine, adenosine, guanosine, cytidine, thymidine, inosine and xanthosine as substrates. Also catalyzes the reverse reactions. This Thiobacillus denitrificans (strain ATCC 25259 / T1) protein is Pyrimidine/purine nucleoside phosphorylase.